The primary structure comprises 344 residues: HTH-type transcriptional repressor MelR (344 aa).

The HTH lacI-type domain occupies 2–58 (VRIKDIALKAKVSSATVSRILNEDESLSVAGETRQRVINIAEELGYQTVAKRRKSRG). The H-T-H motif DNA-binding region spans 4–23 (IKDIALKAKVSSATVSRILN).

The protein localises to the cytoplasm. In terms of biological role, represses the melibiose operon melREDCA in the absence of melibiose or raffinose. Binds to two binding sites at the promoter region of the operon. The protein is HTH-type transcriptional repressor MelR of Bacillus subtilis (strain 168).